We begin with the raw amino-acid sequence, 356 residues long: Guanine nucleotide-binding protein alpha-15 subunit (356 aa).

Residue G2 is the site of N-myristoyl glycine attachment. A lipid anchor (S-palmitoyl cysteine) is attached at C5. Positions 33–356 (GNQKLLLLGT…GRNLRGTGME (324 aa)) constitute a G-alpha domain. Positions 36–49 (KLLLLGTGECGKST) are G1 motif. GTP-binding positions include 41-48 (GTGECGKS), 177-183 (LRIRIPT), 202-206 (DVGGQ), 271-274 (NKRD), and A328. Residues S48 and T183 each contribute to the Mg(2+) site. The G2 motif stretch occupies residues 175–183 (DMLRIRIPT). The G3 motif stretch occupies residues 198 to 207 (FRIYDVGGQR). Positions 267–274 (ILFLNKRD) are G4 motif. Residues 326-331 (TCATDT) are G5 motif.

It belongs to the G-alpha family. As to quaternary structure, g proteins are composed of 3 units; alpha, beta and gamma. The alpha chain contains the guanine nucleotide binding site.

Guanine nucleotide-binding proteins (G proteins) are involved as modulators or transducers in various transmembrane signaling systems. The polypeptide is Guanine nucleotide-binding protein alpha-15 subunit (gpa-15) (Caenorhabditis elegans).